The chain runs to 550 residues: Nucleoside hydrolase 4 (550 aa).

Belongs to the IUNH family.

It is found in the cytoplasm. May be involved in the degradation of nucleosides. This is Nucleoside hydrolase 4 from Arabidopsis thaliana (Mouse-ear cress).